The chain runs to 821 residues: DNA replication licensing factor MCM6 (821 aa).

M1 carries the post-translational modification N-acetylmethionine. Residues S13, S219, and S271 each carry the phosphoserine modification. A Phosphothreonine modification is found at T278. Positions 346–553 constitute an MCM domain; sequence LYHNLCTSLF…TDYAIARRIV (208 aa). 7 residues coordinate ATP: H359, S399, T400, A401, K402, S403, and N504. An Arginine finger motif is present at residues 528-531; it reads SRFD. R619 and E622 together coordinate ADP. At K643 the chain carries N6-acetyllysine. The interval 676–708 is disordered; it reads TDEGQGGVNGHADSPAPVNRFNGSSEDASQETV. Phosphoserine occurs at positions 689, 704, and 762. Polar residues predominate over residues 696–708; it reads FNGSSEDASQETV. T791 carries the post-translational modification Phosphothreonine.

This sequence belongs to the MCM family. As to quaternary structure, component of the MCM2-7 complex. The complex forms a toroidal hexameric ring with the proposed subunit order MCM2-MCM6-MCM4-MCM7-MCM3-MCM5. Component of the CMG helicase complex, a hexameric ring of related MCM2-7 subunits stabilized by CDC45 and the tetrameric GINS complex. May interact with MCM10. Interacts with TIPIN. Interacts with CDT1. Interacts with MCMBP. Interacts with DDI2. Post-translationally, O-glycosylated (O-GlcNAcylated), in a cell cycle-dependent manner.

The protein localises to the nucleus. The protein resides in the chromosome. The enzyme catalyses ATP + H2O = ADP + phosphate + H(+). In terms of biological role, acts as a component of the MCM2-7 complex (MCM complex) which is the replicative helicase essential for 'once per cell cycle' DNA replication initiation and elongation in eukaryotic cells. Core component of CDC45-MCM-GINS (CMG) helicase, the molecular machine that unwinds template DNA during replication, and around which the replisome is built. The active ATPase sites in the MCM2-7 ring are formed through the interaction surfaces of two neighboring subunits such that a critical structure of a conserved arginine finger motif is provided in trans relative to the ATP-binding site of the Walker A box of the adjacent subunit. The six ATPase active sites, however, are likely to contribute differentially to the complex helicase activity. This Mus musculus (Mouse) protein is DNA replication licensing factor MCM6 (Mcm6).